A 220-amino-acid chain; its full sequence is Ribosomal RNA large subunit methyltransferase E (220 aa).

The S-adenosyl-L-methionine site is built by glycine 60, tryptophan 62, aspartate 92, aspartate 108, and aspartate 133. Lysine 173 (proton acceptor) is an active-site residue.

This sequence belongs to the class I-like SAM-binding methyltransferase superfamily. RNA methyltransferase RlmE family.

It localises to the cytoplasm. It catalyses the reaction uridine(2552) in 23S rRNA + S-adenosyl-L-methionine = 2'-O-methyluridine(2552) in 23S rRNA + S-adenosyl-L-homocysteine + H(+). Its function is as follows. Specifically methylates the uridine in position 2552 of 23S rRNA at the 2'-O position of the ribose in the fully assembled 50S ribosomal subunit. This is Ribosomal RNA large subunit methyltransferase E from Paraburkholderia phytofirmans (strain DSM 17436 / LMG 22146 / PsJN) (Burkholderia phytofirmans).